We begin with the raw amino-acid sequence, 755 residues long: Xaa-Pro dipeptidyl-peptidase (755 aa).

Catalysis depends on charge relay system residues Ser-348, Asp-468, and His-498.

It belongs to the peptidase S15 family. Homodimer.

The protein resides in the cytoplasm. The enzyme catalyses Hydrolyzes Xaa-Pro-|- bonds to release unblocked, N-terminal dipeptides from substrates including Ala-Pro-|-p-nitroanilide and (sequentially) Tyr-Pro-|-Phe-Pro-|-Gly-Pro-|-Ile.. Its function is as follows. Removes N-terminal dipeptides sequentially from polypeptides having unsubstituted N-termini provided that the penultimate residue is proline. In Streptococcus thermophilus, this protein is Xaa-Pro dipeptidyl-peptidase.